A 299-amino-acid chain; its full sequence is GTPase Era (299 aa).

The 168-residue stretch at 4–171 (KSGFVAILGR…VDILSENLDE (168 aa)) folds into the Era-type G domain. The tract at residues 12–19 (GRPNVGKS) is G1. A GTP-binding site is contributed by 12–19 (GRPNVGKS). The segment at 38-42 (QTTRN) is G2. Residues 59–62 (DTPG) form a G3 region. Residues 59–63 (DTPGI) and 121–124 (NKID) each bind GTP. The interval 121 to 124 (NKID) is G4. Residues 150–152 (ISA) form a G5 region. Residues 202–280 (TREEIPHSVA…FLETWVKVKK (79 aa)) form the KH type-2 domain.

The protein belongs to the TRAFAC class TrmE-Era-EngA-EngB-Septin-like GTPase superfamily. Era GTPase family. As to quaternary structure, monomer.

It is found in the cytoplasm. It localises to the cell membrane. Functionally, an essential GTPase that binds both GDP and GTP, with rapid nucleotide exchange. Plays a role in 16S rRNA processing and 30S ribosomal subunit biogenesis and possibly also in cell cycle regulation and energy metabolism. This chain is GTPase Era, found in Streptococcus pneumoniae (strain P1031).